The primary structure comprises 405 residues: Multifunctional CCA protein (405 aa).

Gly-8 and Arg-11 together coordinate ATP. Residues Gly-8 and Arg-11 each contribute to the CTP site. Asp-21 and Asp-23 together coordinate Mg(2+). Arg-91, Arg-137, and Arg-140 together coordinate ATP. Residues Arg-91, Arg-137, and Arg-140 each coordinate CTP. Residues Thr-228–Trp-329 form the HD domain.

Belongs to the tRNA nucleotidyltransferase/poly(A) polymerase family. Bacterial CCA-adding enzyme type 1 subfamily. In terms of assembly, monomer. Can also form homodimers and oligomers. Mg(2+) serves as cofactor. The cofactor is Ni(2+).

The enzyme catalyses a tRNA precursor + 2 CTP + ATP = a tRNA with a 3' CCA end + 3 diphosphate. It carries out the reaction a tRNA with a 3' CCA end + 2 CTP + ATP = a tRNA with a 3' CCACCA end + 3 diphosphate. In terms of biological role, catalyzes the addition and repair of the essential 3'-terminal CCA sequence in tRNAs without using a nucleic acid template. Adds these three nucleotides in the order of C, C, and A to the tRNA nucleotide-73, using CTP and ATP as substrates and producing inorganic pyrophosphate. tRNA 3'-terminal CCA addition is required both for tRNA processing and repair. Also involved in tRNA surveillance by mediating tandem CCA addition to generate a CCACCA at the 3' terminus of unstable tRNAs. While stable tRNAs receive only 3'-terminal CCA, unstable tRNAs are marked with CCACCA and rapidly degraded. The protein is Multifunctional CCA protein of Pseudoalteromonas atlantica (strain T6c / ATCC BAA-1087).